The chain runs to 202 residues: CASP-like protein 1U4 (202 aa).

Residues 1–10 (MCLPAKWLHP) lie on the Cytoplasmic side of the membrane. Residues 11 to 31 (VSLIFRVAGIGLAAVSAAAML) form a helical membrane-spanning segment. Over 32 to 56 (TASQCTVYADYGWRPRTVTYSDFPA) the chain is Extracellular. A helical membrane pass occupies residues 57 to 77 (FVYLVAATAIATLLEAVALFL). The Cytoplasmic segment spans residues 78 to 94 (SWSKKGKSKKSWRVLTM). The chain crosses the membrane as a helical span at residues 95 to 115 (LLLGAVVPALLYTSAGAAFAV). At 116 to 146 (GWEDIYYYLEPIGRRFSVCRSSVAGGRFCEH) the chain is on the extracellular side. The helical transmembrane segment at 147 to 167 (VHVSMWLALGAAVAVSFAEFL) threads the bilayer. The Cytoplasmic portion of the chain corresponds to 168-202 (TTFRWCHGSGSCSDSDSDSDSDSESGCGHGCHCKH).

It belongs to the Casparian strip membrane proteins (CASP) family. In terms of assembly, homodimer and heterodimers.

The protein localises to the cell membrane. The sequence is that of CASP-like protein 1U4 from Sorghum bicolor (Sorghum).